A 482-amino-acid chain; its full sequence is MKFIVKPHPEVFVKSDSVRKRFIRILESNLRSIIQRETKGVEVINRRDHIEVTGLSDEYRDVTLAVLTQTPGIHHVLEVKQSGFKDMHDIFEQCLEMNREVIEGKTFCVRVKRRGNHDFTSIELERYVGGGLNQSVESASVRLKNPEVTVKFEVANDKLNLIIARHKGLGGFPLGTQEDVLSLISGGFDSGVSSYLHIKRGSKVHYLFFNLGGPAHEIGVKQVSHFLWKKYGSSAKVKFISVDFDPVVAEILEKVDDGQMGVILKRMFMRAGGMVAEKFGIEGLVTGEALGQVSSQTLTNLRHIDNVTDSLILRPLINWDKEDIIDLAREIGTEDFAKTMPEYCGVISKKPTVKAVKEKLEKEEAKFDFSVLEQAVYNARVMDIRDIEKESQEQAPEVEMVSELGSDVVVLDIRSAEEEDEKPLELDGVEVTHIPFFKLATKFGDLDQSKEYLLYCERGVMSRLQALLLIENGYKNVKVYRP.

The 105-residue stretch at 61-165 folds into the THUMP domain; that stretch reads DVTLAVLTQT…NDKLNLIIAR (105 aa). Residues 183–184, Lys-265, Gly-287, and Gln-296 contribute to the ATP site; that span reads LI. A disulfide bond links Cys-344 and Cys-456. The Rhodanese domain maps to 404–482; sequence LGSDVVVLDI…GYKNVKVYRP (79 aa). The active-site Cysteine persulfide intermediate is Cys-456.

This sequence belongs to the ThiI family.

Its subcellular location is the cytoplasm. It catalyses the reaction [ThiI sulfur-carrier protein]-S-sulfanyl-L-cysteine + a uridine in tRNA + 2 reduced [2Fe-2S]-[ferredoxin] + ATP + H(+) = [ThiI sulfur-carrier protein]-L-cysteine + a 4-thiouridine in tRNA + 2 oxidized [2Fe-2S]-[ferredoxin] + AMP + diphosphate. It carries out the reaction [ThiS sulfur-carrier protein]-C-terminal Gly-Gly-AMP + S-sulfanyl-L-cysteinyl-[cysteine desulfurase] + AH2 = [ThiS sulfur-carrier protein]-C-terminal-Gly-aminoethanethioate + L-cysteinyl-[cysteine desulfurase] + A + AMP + 2 H(+). Its pathway is cofactor biosynthesis; thiamine diphosphate biosynthesis. Functionally, catalyzes the ATP-dependent transfer of a sulfur to tRNA to produce 4-thiouridine in position 8 of tRNAs, which functions as a near-UV photosensor. Also catalyzes the transfer of sulfur to the sulfur carrier protein ThiS, forming ThiS-thiocarboxylate. This is a step in the synthesis of thiazole, in the thiamine biosynthesis pathway. The sulfur is donated as persulfide by IscS. This chain is tRNA sulfurtransferase, found in Aliivibrio fischeri (strain ATCC 700601 / ES114) (Vibrio fischeri).